We begin with the raw amino-acid sequence, 555 residues long: 4-coumarate--CoA ligase-like 9 (555 aa).

Residues Ser200, Ser201, Gly202, Thr203, Thr204, and Lys208 each contribute to the ATP site. Residue Tyr248 coordinates (E)-4-coumaroyl-AMP. Residue Arg269 coordinates CoA. Residues 271 to 342 are SBD1; sequence DLRTFLRALV…RKFPGVQVEE (72 aa). Ala320 contributes to the (E)-4-coumaroyl-AMP binding site. Glu342, Ala343, Thr347, Asp431, and Arg446 together coordinate ATP. Residues Ala343 and Thr347 each coordinate (E)-4-coumaroyl-AMP. The segment at 343–410 is SBD2; that stretch reads AYGLTEHSCI…VRSQSVMQGY (68 aa). The (E)-4-coumaroyl-AMP site is built by Lys448 and Lys452. Positions 454 and 455 each coordinate CoA. Lys537 is a binding site for ATP.

This sequence belongs to the ATP-dependent AMP-binding enzyme family. Interacts with STS1. It depends on Mg(2+) as a cofactor.

It catalyses the reaction (E)-4-coumarate + ATP + CoA = (E)-4-coumaroyl-CoA + AMP + diphosphate. The enzyme catalyses (E)-4-coumarate + ATP + H(+) = (E)-4-coumaroyl-AMP + diphosphate. It carries out the reaction (E)-4-coumaroyl-AMP + CoA = (E)-4-coumaroyl-CoA + AMP + H(+). Carboxylate--CoA ligase that may use 4-coumarate as substrate. Follows a two-step reaction mechanism, wherein the carboxylate substrate first undergoes adenylation by ATP, followed by a thioesterification in the presence of CoA to yield the final CoA thioester. The protein is 4-coumarate--CoA ligase-like 9 (4CLL9) of Oryza sativa subsp. japonica (Rice).